A 192-amino-acid chain; its full sequence is MKNKVVVVTGVPGVGGTTVTQKAMDILSEEGLNYKMVNFGSAMFDVANEEGLASDRDQMRRLDPETQKRIQKMAGRKIAEMAKESPVAVDTHSTVKTPKGYLPGLPAWVLTELNPDIVIVVETDGDEILMRRLSDESRKRDLETTASIEEHQFMNRAAAMSYGVLTGATVKIVKNKNGLVDNAVEELMSVLR.

10–18 (GVPGVGGTT) contributes to the ATP binding site.

The protein belongs to the archaeal adenylate kinase family. As to quaternary structure, monomer.

The protein localises to the cytoplasm. It catalyses the reaction AMP + ATP = 2 ADP. The protein is Adenylate kinase of Methanococcus maripaludis (strain DSM 14266 / JCM 13030 / NBRC 101832 / S2 / LL).